Consider the following 179-residue polypeptide: Fas apoptotic inhibitory molecule 1 (179 aa).

Thr2 is modified (N-acetylthreonine).

The protein belongs to the FAIM1 family.

Its subcellular location is the cytoplasm. Plays a role as an inducible effector molecule that mediates Fas resistance produced by surface Ig engagement in B cells. This chain is Fas apoptotic inhibitory molecule 1 (FAIM), found in Homo sapiens (Human).